The chain runs to 575 residues: Dihydroxy-acid dehydratase (575 aa).

Cys-64 provides a ligand contact to [2Fe-2S] cluster. Asp-96 lines the Mg(2+) pocket. Cys-137 provides a ligand contact to [2Fe-2S] cluster. Residues Asp-138 and Lys-139 each coordinate Mg(2+). The residue at position 139 (Lys-139) is an N6-carboxylysine. Cys-214 serves as a coordination point for [2Fe-2S] cluster. Residue Glu-465 participates in Mg(2+) binding. The active-site Proton acceptor is the Ser-491.

The protein belongs to the IlvD/Edd family. Homodimer. It depends on [2Fe-2S] cluster as a cofactor. Mg(2+) is required as a cofactor.

It catalyses the reaction (2R)-2,3-dihydroxy-3-methylbutanoate = 3-methyl-2-oxobutanoate + H2O. The catalysed reaction is (2R,3R)-2,3-dihydroxy-3-methylpentanoate = (S)-3-methyl-2-oxopentanoate + H2O. The protein operates within amino-acid biosynthesis; L-isoleucine biosynthesis; L-isoleucine from 2-oxobutanoate: step 3/4. It participates in amino-acid biosynthesis; L-valine biosynthesis; L-valine from pyruvate: step 3/4. Functionally, functions in the biosynthesis of branched-chain amino acids. Catalyzes the dehydration of (2R,3R)-2,3-dihydroxy-3-methylpentanoate (2,3-dihydroxy-3-methylvalerate) into 2-oxo-3-methylpentanoate (2-oxo-3-methylvalerate) and of (2R)-2,3-dihydroxy-3-methylbutanoate (2,3-dihydroxyisovalerate) into 2-oxo-3-methylbutanoate (2-oxoisovalerate), the penultimate precursor to L-isoleucine and L-valine, respectively. This chain is Dihydroxy-acid dehydratase, found in Mycobacterium bovis (strain ATCC BAA-935 / AF2122/97).